The primary structure comprises 111 residues: Secreted transmembrane peptide 5 (111 aa).

The N-terminal stretch at 1 to 46 is a signal peptide; that stretch reads MRLSVFYIFITRLAMTKNATKNEMGSKSPNIVALVLPLLLILYTLS. The short motif at 66–79 is the SCOOP motif element; that stretch reads IVWTPHSNSCGGSP. Positions 72–74 match the SxS motif essential for MIK2 binding motif; the sequence is SNS. Residues 89–111 are disordered; sequence TTGRPCRRSRPPGTNIPVSDQSP.

This sequence belongs to the serine rich endogenous peptide (SCOOP) phytocytokine family. In terms of assembly, interacts with MIK2 (via extracellular leucine-rich repeat domain); this interaction triggers the formation of complex between MIK2 and the BAK1/SERK3 and SERK4 coreceptors, and subsequent BAK1 activation by phosphorylation. In terms of tissue distribution, mostly expressed in leaves, and, to a lower extent, in roots, stems, siliques, seeds and flowers.

The protein localises to the cell membrane. It localises to the secreted. It is found in the extracellular space. The protein resides in the apoplast. Brassicaceae-specific phytocytokine (plant endogenous peptide released into the apoplast) perceived by MIK2 in a BAK1/SERK3 and SERK4 coreceptors-dependent manner, that modulates various physiological and antimicrobial processes including growth prevention and reactive oxygen species (ROS) response regulation. In Arabidopsis thaliana (Mouse-ear cress), this protein is Secreted transmembrane peptide 5.